Consider the following 247-residue polypeptide: MAGHSKWKNIQRRKNAQDAKRGKLFMKLAKEIYVAAKNGGGDPAANPSLRLVIEKAKAANMPGENIERAIKKATGNQEHTNYEEIRYEGYGPGGVAVMVVCLTDNKNRTAANVRSAFSKNGGNLGETGCVSYLFERKGLLVIDREQHNMEEDELLLLAIEAGAEEMETTDESFEIYTTPESFETVKEQLEQQGLTFASAEITMIPQTYTTLSGDELKKMLKLIDTLEDDDDVQEVYHNLDESVIEEQ.

Basic residues predominate over residues 1 to 14 (MAGHSKWKNIQRRK). The segment at 1–21 (MAGHSKWKNIQRRKNAQDAKR) is disordered.

The protein belongs to the TACO1 family.

It is found in the cytoplasm. This Geobacillus thermodenitrificans (strain NG80-2) protein is Probable transcriptional regulatory protein GTNG_2524.